We begin with the raw amino-acid sequence, 244 residues long: Mediator of RNA polymerase II transcription subunit 19 (244 aa).

Disordered stretches follow at residues 1-67 (MENF…PFYL) and 171-244 (PKKK…SSLR). Residues 26–38 (GKPPPPPPPPPGG) show a composition bias toward pro residues. Positions 44-55 (PPSTATSAPAGA) are enriched in low complexity. Basic residues predominate over residues 171–182 (PKKKNKHKHKQS). At Ser194 the chain carries Phosphoserine. Residues 212 to 224 (KRKKKEKKKKKNR) are compositionally biased toward basic residues. Ser226 is subject to Phosphoserine. Low complexity predominate over residues 234-244 (SSQASSSSSLR).

The protein belongs to the Mediator complex subunit 19 family. Component of the Mediator complex, which is composed of MED1, MED4, MED6, MED7, MED8, MED9, MED10, MED11, MED12, MED13, MED13L, MED14, MED15, MED16, MED17, MED18, MED19, MED20, MED21, MED22, MED23, MED24, MED25, MED26, MED27, MED29, MED30, MED31, CCNC, CDK8 and CDC2L6/CDK11. The MED12, MED13, CCNC and CDK8 subunits form a distinct module termed the CDK8 module. Mediator containing the CDK8 module is less active than Mediator lacking this module in supporting transcriptional activation. Individual preparations of the Mediator complex lacking one or more distinct subunits have been variously termed ARC, CRSP, DRIP, PC2, SMCC and TRAP.

It is found in the nucleus. Functionally, component of the Mediator complex, a coactivator involved in the regulated transcription of nearly all RNA polymerase II-dependent genes. Mediator functions as a bridge to convey information from gene-specific regulatory proteins to the basal RNA polymerase II transcription machinery. Mediator is recruited to promoters by direct interactions with regulatory proteins and serves as a scaffold for the assembly of a functional preinitiation complex with RNA polymerase II and the general transcription factors. The protein is Mediator of RNA polymerase II transcription subunit 19 (Med19) of Mus musculus (Mouse).